Consider the following 93-residue polypeptide: Acylphosphatase (93 aa).

A disulfide bond links C5 and C49. The Acylphosphatase-like domain maps to 5–93 (CTIAWIYGRV…ETLTDFSIRY (89 aa)). Catalysis depends on residues R20 and N38.

This sequence belongs to the acylphosphatase family.

The enzyme catalyses an acyl phosphate + H2O = a carboxylate + phosphate + H(+). This Salmonella arizonae (strain ATCC BAA-731 / CDC346-86 / RSK2980) protein is Acylphosphatase.